We begin with the raw amino-acid sequence, 286 residues long: CDP-diacylglycerol--serine O-phosphatidyltransferase (286 aa).

The next 5 helical transmembrane spans lie at 15 to 35 (ILPSAMTVLSICAGLTAIKFA), 95 to 115 (MLSKWPVGWVVVLLYAVCVVL), 135 to 155 (EFFVGMPAPAGAVSMIGLLAL), 167 to 187 (VWFLSFWVTGTSILLVSGIPM), and 207 to 227 (LAICAAAAVLAPYLLIWVIII).

Belongs to the CDP-alcohol phosphatidyltransferase class-I family.

The protein localises to the cell membrane. It catalyses the reaction a CDP-1,2-diacyl-sn-glycerol + L-serine = a 1,2-diacyl-sn-glycero-3-phospho-L-serine + CMP + H(+). This is CDP-diacylglycerol--serine O-phosphatidyltransferase (pssA) from Mycobacterium bovis (strain ATCC BAA-935 / AF2122/97).